The primary structure comprises 669 residues: DNA ligase (669 aa).

NAD(+) is bound by residues 34 to 38 (DAEYD), 83 to 84 (SL), and E114. K116 acts as the N6-AMP-lysine intermediate in catalysis. NAD(+)-binding residues include R137, E171, K287, and K311. The Zn(2+) site is built by C405, C408, C423, and C428. A BRCT domain is found at 591 to 669 (NVESYFAGKT…EERFLQELNK (79 aa)).

It belongs to the NAD-dependent DNA ligase family. LigA subfamily. It depends on Mg(2+) as a cofactor. The cofactor is Mn(2+).

The enzyme catalyses NAD(+) + (deoxyribonucleotide)n-3'-hydroxyl + 5'-phospho-(deoxyribonucleotide)m = (deoxyribonucleotide)n+m + AMP + beta-nicotinamide D-nucleotide.. Functionally, DNA ligase that catalyzes the formation of phosphodiester linkages between 5'-phosphoryl and 3'-hydroxyl groups in double-stranded DNA using NAD as a coenzyme and as the energy source for the reaction. It is essential for DNA replication and repair of damaged DNA. In Bacillus cereus (strain B4264), this protein is DNA ligase.